Reading from the N-terminus, the 675-residue chain is MVPPGKKPAGEASNSNKKCKRYFNEHWKEEFTWLDFDYERKLMFCLECRQALVRNKHGKAENAFTVGTDNFQRHALLRHVTSGAHRQALAVNQGQPPFEGQAEGGGACPGLATTPASRGVKVELDPAKVAVLTTVYCMAKEDVPNDRCSALLELQRFNLCQALLGTEHGDYYSPRRVRDMQVAIASVLHTEACQRLKASPYVGLVLDETRDWPESHSLALFATSVSPCDGQPATTFLGSVELQEGEATAGQLLDILQAFGVSAPKLAWLSSSLPSERLGSVGPQLRATCPLLAELHCLPGRTDPEPPAYLGQYESILDALFRLHGGPSSHLVPELRAALDLAAIDLAGPRPVPWASLLPVVEAVAEAWPGLVPTLEAAALASPVAGSLALALRQFTFVAFTHLLLDALPSVQKLSLVLQAEEPDLALLQPLVMAAAASLQAQRGSGGARLQGFLQELASMDPDASSGRCTYRGVELLGYSEAAVRGLEWLRGSFLDSMRKGLQDSYPGPSLDAVAAFAAIFDPRRYPQAPEELGTHGEGALRVLLRGFAPAVVRQRALGDFALFKRVVFGLGRLGPRALCTQLACAHSELHELFPDFAALAALALALPAGAGLLDKVGRSRELRWWGQSGAGEGRGGHMVKIAVDGPPLHEFDFGLAVEFLESGWGEGFLGSQLT.

This is an uncharacterized protein from Homo sapiens (Human).